The following is a 185-amino-acid chain: Ribosome-recycling factor (185 aa).

This sequence belongs to the RRF family.

Its subcellular location is the cytoplasm. Functionally, responsible for the release of ribosomes from messenger RNA at the termination of protein biosynthesis. May increase the efficiency of translation by recycling ribosomes from one round of translation to another. The protein is Ribosome-recycling factor of Actinobacillus succinogenes (strain ATCC 55618 / DSM 22257 / CCUG 43843 / 130Z).